A 451-amino-acid chain; its full sequence is Ubiquinone biosynthesis monooxygenase COQ6, mitochondrial (451 aa).

This sequence belongs to the UbiH/COQ6 family. As to quaternary structure, component of a multi-subunit COQ enzyme complex. The cofactor is FAD.

The protein resides in the mitochondrion inner membrane. It carries out the reaction a 4-hydroxy-3-(all-trans-polyprenyl)benzoate + 2 reduced [2Fe-2S]-[ferredoxin] + O2 + 2 H(+) = a 3,4-dihydroxy-5-(all-trans-polyprenyl)benzoate + 2 oxidized [2Fe-2S]-[ferredoxin] + H2O. It catalyses the reaction a 2-methoxy-6-(all-trans-polyprenyl)phenol + 2 reduced [2Fe-2S]-[ferredoxin] + O2 + 2 H(+) = a 2-methoxy-6-(all-trans-polyprenyl)benzene-1,4-diol + 2 oxidized [2Fe-2S]-[ferredoxin] + H2O. It functions in the pathway cofactor biosynthesis; ubiquinone biosynthesis. Functionally, FAD-dependent monooxygenase required for two non-consecutive steps during ubiquinone biosynthesis. Required for the C5-ring hydroxylation during ubiquinone biosynthesis by catalyzing the hydroxylation of 4-hydroxy-3-(all-trans-polyprenyl)benzoic acid to 3,4-dihydroxy-5-(all-trans-polyprenyl)benzoic acid. Also acts downstream of coq4, for the C1-hydroxylation during ubiquinone biosynthesis by catalyzing the hydroxylation of 2-methoxy-6-(all-trans-polyprenyl)phenol to 2-methoxy-6-(all-trans-polyprenyl)benzene-1,4-diol. The electrons required for the hydroxylation reaction are funneled indirectly to coq-6 from NADPH via a ferredoxin/ferredoxin reductase system. This chain is Ubiquinone biosynthesis monooxygenase COQ6, mitochondrial, found in Caenorhabditis elegans.